The sequence spans 463 residues: General transcription factor IIH subunit 4 (463 aa).

Belongs to the TFB2 family. In terms of assembly, component of the 7-subunit TFIIH core complex composed of XPB/ERCC3, XPD/ERCC2, GTF2H1, GTF2H2, GTF2H3, GTF2H4 and GTF2H5, which is active in NER. The core complex associates with the 3-subunit CDK-activating kinase (CAK) module composed of CCNH/cyclin H, CDK7 and MNAT1 to form the 10-subunit holoenzyme (holo-TFIIH) active in transcription. Part of TBP-based Pol II pre-initiation complex (PIC), in which Pol II core assembles with general transcription factors and other specific initiation factors including GTF2E1, GTF2E2, GTF2F1, GTF2F2, TCEA1, ERCC2, ERCC3, GTF2H2, GTF2H3, GTF2H4, GTF2H5, GTF2A1, GTF2A2, GTF2B and TBP; this large multi-subunit PIC complex mediates DNA unwinding and targets Pol II core to the transcription start site where the first phosphodiester bond forms.

The protein localises to the nucleus. Component of the general transcription and DNA repair factor IIH (TFIIH) core complex, which is involved in general and transcription-coupled nucleotide excision repair (NER) of damaged DNA and, when complexed to CAK, in RNA transcription by RNA polymerase II. In NER, TFIIH acts by opening DNA around the lesion to allow the excision of the damaged oligonucleotide and its replacement by a new DNA fragment. In transcription, TFIIH has an essential role in transcription initiation. When the pre-initiation complex (PIC) has been established, TFIIH is required for promoter opening and promoter escape. Phosphorylation of the C-terminal tail (CTD) of the largest subunit of RNA polymerase II by the kinase module CAK controls the initiation of transcription. This Mus musculus (Mouse) protein is General transcription factor IIH subunit 4 (Gtf2h4).